The following is a 492-amino-acid chain: Bifunctional protein GlmU (492 aa).

Residues 1-241 (MTFRGDTAVV…SALVAGVNDR (241 aa)) form a pyrophosphorylase region. UDP-N-acetyl-alpha-D-glucosamine is bound by residues 12-15 (LAAG), lysine 26, glutamine 83, and 88-89 (GT). Aspartate 114 contacts Mg(2+). UDP-N-acetyl-alpha-D-glucosamine is bound by residues glycine 151, glutamate 166, asparagine 181, and asparagine 239. Asparagine 239 lines the Mg(2+) pocket. Positions 242–262 (VQLAQLGAELNRRIVAAHQMA) are linker. The tract at residues 263–492 (GVTVIDPATT…TPPPDADHPP (230 aa)) is N-acetyltransferase. Residues arginine 344 and lysine 362 each coordinate UDP-N-acetyl-alpha-D-glucosamine. Residue histidine 374 is the Proton acceptor of the active site. UDP-N-acetyl-alpha-D-glucosamine contacts are provided by tyrosine 377 and asparagine 388. Acetyl-CoA is bound by residues alanine 391, 397-398 (NY), and alanine 434. Residues 443–492 (PPGALAVSGGPQRNIEDWVQQKRPGTPSAEAARKASAEQSTPPPDADHPP) form a disordered region.

In the N-terminal section; belongs to the N-acetylglucosamine-1-phosphate uridyltransferase family. The protein in the C-terminal section; belongs to the transferase hexapeptide repeat family. Homotrimer. Requires Mg(2+) as cofactor.

It is found in the cytoplasm. The catalysed reaction is alpha-D-glucosamine 1-phosphate + acetyl-CoA = N-acetyl-alpha-D-glucosamine 1-phosphate + CoA + H(+). The enzyme catalyses N-acetyl-alpha-D-glucosamine 1-phosphate + UTP + H(+) = UDP-N-acetyl-alpha-D-glucosamine + diphosphate. It functions in the pathway nucleotide-sugar biosynthesis; UDP-N-acetyl-alpha-D-glucosamine biosynthesis; N-acetyl-alpha-D-glucosamine 1-phosphate from alpha-D-glucosamine 6-phosphate (route II): step 2/2. It participates in nucleotide-sugar biosynthesis; UDP-N-acetyl-alpha-D-glucosamine biosynthesis; UDP-N-acetyl-alpha-D-glucosamine from N-acetyl-alpha-D-glucosamine 1-phosphate: step 1/1. Its pathway is bacterial outer membrane biogenesis; LPS lipid A biosynthesis. Functionally, catalyzes the last two sequential reactions in the de novo biosynthetic pathway for UDP-N-acetylglucosamine (UDP-GlcNAc). The C-terminal domain catalyzes the transfer of acetyl group from acetyl coenzyme A to glucosamine-1-phosphate (GlcN-1-P) to produce N-acetylglucosamine-1-phosphate (GlcNAc-1-P), which is converted into UDP-GlcNAc by the transfer of uridine 5-monophosphate (from uridine 5-triphosphate), a reaction catalyzed by the N-terminal domain. This is Bifunctional protein GlmU from Mycobacterium ulcerans (strain Agy99).